A 35-amino-acid polypeptide reads, in one-letter code: Delta-theraphotoxin-Hm1a (35 aa).

3 disulfide bridges follow: Cys2-Cys16, Cys9-Cys21, and Cys15-Cys28.

This sequence belongs to the neurotoxin 10 (Hwtx-1) family. 09 (HaTx) subfamily. As to expression, expressed by the venom gland.

The protein localises to the secreted. In terms of biological role, gating-modifier toxin that potently inhibits inactivation of the mammalian Nav1.1/SCN1A sodium channel (EC(50)=38 nM). Also moderately inhibits inactivation of Nav1.2/SCN2A (EC(50)=236 nM) and Nav1.3/SCN3A (EC(50)=220 nM) when the channels are expressed in oocytes without the beta-1 auxiliary subunit. Does not inhibit inactivation of Nav1.2/SCN2A when the channel is coexpressed with the beta-1 auxiliary subunit. When tested on Nav1.1/SCN1A channel, it enhances peak current amplitude and potently delays channel inactivation in a dose-dependent manner, leading to a large sustained current. It has no effect on the voltage-dependence of steady-state activation, and induces a depolarizing shift in the voltage dependence of inactivation. In addition, it does not modify the recovery from fast inactivation in Nav1.1/SCN1A. The binding affinity and subtype selectivity of the toxin towards Nav1.1/SCN1A channel is determined by residues within both the S1-S2 and S3-S4 loops of the domain IV voltage sensor of the channel. This toxin also weakly inhibits several subtypes of voltage-gated potassium channels. It moderately blocks Kv2.1/KCNB1 (23% inhibition at 100 nM), Kv2.2/KCNB2 (19.7% at 100 nM and 51% at 300 nM), Kv4.1/KCND1 (IC(50)=280 nM), Kv4.2/KCND2 (39% at 300 nM) and Kv4.3/KCND3 (43% at 300 nM). In vivo, intracerebroventricular injection into mice elicits convulsions, spasms, tremors and rapid death. When injected into mouse hindpaw, the toxin elicits an immediate and robust response to pain. However, intraplantar injection of toxin does not cause neurogenic inflammation or alter sensitivity to heat, indicative of a modality-specific effect on mechanosensitive neurons. In Dravet syndrome mice model, intracerebroventricular infusion of this peptide rescues mice from seizures and premature death. In Heteroscodra maculata (Togo starburst tarantula), this protein is Delta-theraphotoxin-Hm1a.